The primary structure comprises 469 residues: Hydrogen cyanide synthase subunit HcnB (469 aa).

Heterotrimer of HcnA, HcnB and HcnC.

It is found in the cell membrane. It catalyses the reaction glycine + 2 A = hydrogen cyanide + 2 AH2 + CO2. A three-component membrane-bound flavoenzyme that catalyzes the formation of hydrogen cyanide, a secondary metabolite, by transfer of electrons to a cyanide-resistant branch of the aerobic respiratory chain. Contributes to suppression of black root rot of tobacco. This chain is Hydrogen cyanide synthase subunit HcnB, found in Pseudomonas protegens (strain DSM 19095 / LMG 27888 / CFBP 6595 / CHA0).